The chain runs to 148 residues: Putative cyclin-dependent kinase inhibitor SPL2 (148 aa).

Residues Ser59 and Ser86 each carry the phosphoserine modification.

It is found in the cytoplasmic granule. It localises to the cytoplasm. Functionally, putative cyclin-dependent kinase (CDK) inhibitor necessary and sufficient for PHO pathway-dependent down-regulation of low-affinity phosphate transport. The chain is Putative cyclin-dependent kinase inhibitor SPL2 (SPL2) from Saccharomyces cerevisiae (strain ATCC 204508 / S288c) (Baker's yeast).